A 146-amino-acid chain; its full sequence is Dual specificity phosphatase Cdc25 (146 aa).

A Rhodanese domain is found at 34–135 (RRPNIAIIDV…WEASGKPVCR (102 aa)). 45 to 48 (DEER) contributes to the substrate binding site. His53 lines the Zn(2+) pocket. 68–71 (KISH) is a substrate binding site. Cys86 (cysteine persulfide intermediate) is an active-site residue. 90 to 92 (QVR) is a binding site for substrate. Positions 134, 136, and 141 each coordinate Zn(2+).

The protein belongs to the MPI phosphatase family. As to expression, expressed in roots and at lower levels in shoots (at protein level). Expressed in leaves, stems and flowers.

It localises to the nucleus. The enzyme catalyses O-phospho-L-tyrosyl-[protein] + H2O = L-tyrosyl-[protein] + phosphate. It catalyses the reaction [glutaredoxin]-dithiol + arsenate + glutathione + H(+) = glutathionyl-S-S-[glutaredoxin] + arsenite + H2O. Inhibited by NSC95397. Tyrosine protein phosphatase that dephosphorylates CDK complex and activate its kinase activity in vitro. Functionally, arsenate reductase that plays a major role in the reduction of arsenate to arsenite and arsenic retention in roots. Has an in vitro and in vivo arsenate reductase activity. Plays no role in arsenic metabolism. This Arabidopsis thaliana (Mouse-ear cress) protein is Dual specificity phosphatase Cdc25.